The chain runs to 158 residues: NADPH-dependent 7-cyano-7-deazaguanine reductase (158 aa).

The active-site Thioimide intermediate is Cys-56. Residue Asp-63 is the Proton donor of the active site. Residues 78-80 (LES) and 97-98 (HE) contribute to the substrate site.

This sequence belongs to the GTP cyclohydrolase I family. QueF type 1 subfamily.

Its subcellular location is the cytoplasm. The catalysed reaction is 7-aminomethyl-7-carbaguanine + 2 NADP(+) = 7-cyano-7-deazaguanine + 2 NADPH + 3 H(+). Its pathway is tRNA modification; tRNA-queuosine biosynthesis. In terms of biological role, catalyzes the NADPH-dependent reduction of 7-cyano-7-deazaguanine (preQ0) to 7-aminomethyl-7-deazaguanine (preQ1). The sequence is that of NADPH-dependent 7-cyano-7-deazaguanine reductase from Rhodopseudomonas palustris (strain TIE-1).